Reading from the N-terminus, the 386-residue chain is Patatin-06 (386 aa).

The signal sequence occupies residues 1 to 23 (MATTKSFLILFFMILATTSSTCA). A PNPLA domain is found at 32-229 (LSIDGGGIKG…TVGDPALLSL (198 aa)). Positions 36–41 (GGGIKG) match the GXGXXG motif. The short motif at 75–79 (GTSTG) is the GXSXG element. Serine 77 functions as the Nucleophile in the catalytic mechanism. N-linked (GlcNAc...) asparagine glycosylation is present at asparagine 115. Aspartate 215 functions as the Proton acceptor in the catalytic mechanism. The DGA/G signature appears at 215 to 217 (DGG). Positions 321–384 (ENALTGTTTE…NRKKLRANKA (64 aa)) form a coiled coil.

The protein belongs to the patatin family. As to expression, tuber.

The protein localises to the vacuole. Its function is as follows. Probable lipolytic acyl hydrolase (LAH), an activity which is thought to be involved in the response of tubers to pathogens. The chain is Patatin-06 from Solanum tuberosum (Potato).